Here is an 815-residue protein sequence, read N- to C-terminus: Probable disease resistance protein At5g66910 (815 aa).

Positions 1-150 (MVVVDWLGLG…NINKKLDRLS (150 aa)) constitute an RPW8 domain. NB-ARC domains lie at 156-283 (PLVS…DVWQ) and 341-440 (SPDE…DIWM). 196 to 203 (GPPGCGKT) provides a ligand contact to ATP. LRR repeat units lie at residues 656 to 678 (NLQE…IPEV), 680 to 702 (SLKT…IGNL), 704 to 726 (RLEV…TERL), and 728 to 750 (NLRS…IGKL).

It belongs to the disease resistance NB-LRR family.

In terms of biological role, probable disease resistance protein. This is Probable disease resistance protein At5g66910 from Arabidopsis thaliana (Mouse-ear cress).